The following is a 261-amino-acid chain: MTHQTHAYHMVNPSPWPLTGALSALLMTSGLAMWFHYNLTLLLTLGMTTNLLTMYQWWRDIIRESTFQGHHTPIVQKGLRYGMILFIISEVFFFAGFFWAFYHSSLAPTPELGGCWPPTGIIPLNPLEVPLLNTSVLLASGVSITWAHHSLMEGNRKHMLQALFITISLGVYFTLLQASEYYETSFTISDGVYGSTFFMATGFHGLHVIIGSTFLIVCFLRQLKYHFTSNHHFGFEAAAWYWHFVDVVWLFLYVSIYWWGS.

Residues 1–15 lie on the Mitochondrial matrix side of the membrane; sequence MTHQTHAYHMVNPSP. Residues 16–34 traverse the membrane as a helical segment; sequence WPLTGALSALLMTSGLAMW. The Mitochondrial intermembrane portion of the chain corresponds to 35–40; it reads FHYNLT. Residues 41-66 form a helical membrane-spanning segment; that stretch reads LLLTLGMTTNLLTMYQWWRDIIREST. The Mitochondrial matrix segment spans residues 67 to 72; the sequence is FQGHHT. A helical membrane pass occupies residues 73–105; the sequence is PIVQKGLRYGMILFIISEVFFFAGFFWAFYHSS. At 106-128 the chain is on the mitochondrial intermembrane side; sequence LAPTPELGGCWPPTGIIPLNPLE. Residues 129 to 152 traverse the membrane as a helical segment; it reads VPLLNTSVLLASGVSITWAHHSLM. The Mitochondrial matrix portion of the chain corresponds to 153–155; that stretch reads EGN. The helical transmembrane segment at 156-183 threads the bilayer; that stretch reads RKHMLQALFITISLGVYFTLLQASEYYE. Over 184 to 190 the chain is Mitochondrial intermembrane; it reads TSFTISD. The chain crosses the membrane as a helical span at residues 191–223; that stretch reads GVYGSTFFMATGFHGLHVIIGSTFLIVCFLRQL. The Mitochondrial matrix portion of the chain corresponds to 224–232; sequence KYHFTSNHH. Residues 233–256 traverse the membrane as a helical segment; it reads FGFEAAAWYWHFVDVVWLFLYVSI. Residues 257–261 are Mitochondrial intermembrane-facing; sequence YWWGS.

This sequence belongs to the cytochrome c oxidase subunit 3 family. In terms of assembly, component of the cytochrome c oxidase (complex IV, CIV), a multisubunit enzyme composed of 14 subunits. The complex is composed of a catalytic core of 3 subunits MT-CO1, MT-CO2 and MT-CO3, encoded in the mitochondrial DNA, and 11 supernumerary subunits COX4I, COX5A, COX5B, COX6A, COX6B, COX6C, COX7A, COX7B, COX7C, COX8 and NDUFA4, which are encoded in the nuclear genome. The complex exists as a monomer or a dimer and forms supercomplexes (SCs) in the inner mitochondrial membrane with NADH-ubiquinone oxidoreductase (complex I, CI) and ubiquinol-cytochrome c oxidoreductase (cytochrome b-c1 complex, complex III, CIII), resulting in different assemblies (supercomplex SCI(1)III(2)IV(1) and megacomplex MCI(2)III(2)IV(2)).

It is found in the mitochondrion inner membrane. The catalysed reaction is 4 Fe(II)-[cytochrome c] + O2 + 8 H(+)(in) = 4 Fe(III)-[cytochrome c] + 2 H2O + 4 H(+)(out). Component of the cytochrome c oxidase, the last enzyme in the mitochondrial electron transport chain which drives oxidative phosphorylation. The respiratory chain contains 3 multisubunit complexes succinate dehydrogenase (complex II, CII), ubiquinol-cytochrome c oxidoreductase (cytochrome b-c1 complex, complex III, CIII) and cytochrome c oxidase (complex IV, CIV), that cooperate to transfer electrons derived from NADH and succinate to molecular oxygen, creating an electrochemical gradient over the inner membrane that drives transmembrane transport and the ATP synthase. Cytochrome c oxidase is the component of the respiratory chain that catalyzes the reduction of oxygen to water. Electrons originating from reduced cytochrome c in the intermembrane space (IMS) are transferred via the dinuclear copper A center (CU(A)) of subunit 2 and heme A of subunit 1 to the active site in subunit 1, a binuclear center (BNC) formed by heme A3 and copper B (CU(B)). The BNC reduces molecular oxygen to 2 water molecules using 4 electrons from cytochrome c in the IMS and 4 protons from the mitochondrial matrix. This chain is Cytochrome c oxidase subunit 3 (MT-CO3), found in Felis catus (Cat).